The sequence spans 357 residues: Protein pelota homolog (357 aa).

It belongs to the eukaryotic release factor 1 family. Pelota subfamily. As to quaternary structure, monomer. It depends on a divalent metal cation as a cofactor.

It localises to the cytoplasm. Functionally, may function in recognizing stalled ribosomes, interact with stem-loop structures in stalled mRNA molecules, and effect endonucleolytic cleavage of the mRNA. May play a role in the release non-functional ribosomes and degradation of damaged mRNAs. Has endoribonuclease activity. The polypeptide is Protein pelota homolog (Thermococcus kodakarensis (strain ATCC BAA-918 / JCM 12380 / KOD1) (Pyrococcus kodakaraensis (strain KOD1))).